Consider the following 245-residue polypeptide: 2,3-bisphosphoglycerate-dependent phosphoglycerate mutase (245 aa).

Substrate contacts are provided by residues 8–15 (RHGQSLWN), 21–22 (TG), arginine 60, 87–90 (ERHY), lysine 98, 114–115 (RR), and 183–184 (GN). Histidine 9 serves as the catalytic Tele-phosphohistidine intermediate. Glutamate 87 functions as the Proton donor/acceptor in the catalytic mechanism.

Belongs to the phosphoglycerate mutase family. BPG-dependent PGAM subfamily.

The catalysed reaction is (2R)-2-phosphoglycerate = (2R)-3-phosphoglycerate. It participates in carbohydrate degradation; glycolysis; pyruvate from D-glyceraldehyde 3-phosphate: step 3/5. Its function is as follows. Catalyzes the interconversion of 2-phosphoglycerate and 3-phosphoglycerate. This is 2,3-bisphosphoglycerate-dependent phosphoglycerate mutase from Bacillus thuringiensis (strain Al Hakam).